Consider the following 79-residue polypeptide: MPVAVGPYGQSQPSCFDRVKMGFMMGFAVGMAAGALFGTFSCLRFGMRGRELMGGVGKTMMQSGGTFGTFMAIGMGIRC.

A helical transmembrane segment spans residues 23–43; that stretch reads FMMGFAVGMAAGALFGTFSCL. Residues 42 to 60 are sufficient for antibacterial activity; that stretch reads CLRFGMRGRELMGGVGKTM.

It belongs to the MGR2 family.

The protein localises to the mitochondrion inner membrane. Has antibacterial activity against a variety of bacteria including S.aureus, P.aeruginosa and M.tuberculosis. Acts by inducing bacterial membrane breakage. In terms of biological role, induces production of reactive oxygen species (ROS) which are necessary for cell proliferation. May play a role in inducing oxidative DNA damage and replicative senescence. May play a role in the coordination of mitochondrial morphology and cell proliferation. This is Reactive oxygen species modulator 1 (romo1) from Xenopus tropicalis (Western clawed frog).